The following is a 45-amino-acid chain: Photosystem II reaction center protein K (45 aa).

A propeptide spanning residues 1–8 is cleaved from the precursor; the sequence is MTQIFLIG. A helical membrane pass occupies residues 20–40; that stretch reads IVDVLPIIPVLFLLLAFVWQA.

This sequence belongs to the PsbK family. In terms of assembly, PSII is composed of 1 copy each of membrane proteins PsbA, PsbB, PsbC, PsbD, PsbE, PsbF, PsbH, PsbI, PsbJ, PsbK, PsbL, PsbM, PsbT, PsbX, PsbY, PsbZ, Psb30/Ycf12, at least 3 peripheral proteins of the oxygen-evolving complex and a large number of cofactors. It forms dimeric complexes.

Its subcellular location is the plastid. The protein resides in the chloroplast thylakoid membrane. Its function is as follows. One of the components of the core complex of photosystem II (PSII). PSII is a light-driven water:plastoquinone oxidoreductase that uses light energy to abstract electrons from H(2)O, generating O(2) and a proton gradient subsequently used for ATP formation. It consists of a core antenna complex that captures photons, and an electron transfer chain that converts photonic excitation into a charge separation. This is Photosystem II reaction center protein K from Ostreococcus tauri.